A 373-amino-acid chain; its full sequence is Probable quinol oxidase subunit 2 (373 aa).

The N-terminal stretch at 1 to 19 (MSKFKSLLLLFGSLILLSG) is a signal peptide. Cys20 is lipidated: N-palmitoyl cysteine. Residue Cys20 is the site of S-diacylglycerol cysteine attachment. Helical transmembrane passes span 38-58 (FLIM…LILF) and 82-102 (LETI…IPTV). Basic and acidic residues-rich tracts occupy residues 292-320 (EERT…ERHG) and 339-373 (EESH…GGGH). Residues 292-373 (EERTADVLDK…KKDHENGGGH (82 aa)) form a disordered region.

Belongs to the cytochrome c oxidase subunit 2 family.

It localises to the cell membrane. It catalyses the reaction 2 a quinol + O2 = 2 a quinone + 2 H2O. Functionally, catalyzes quinol oxidation with the concomitant reduction of oxygen to water. Subunit II transfers the electrons from a quinol to the binuclear center of the catalytic subunit I. The sequence is that of Probable quinol oxidase subunit 2 (qoxA) from Staphylococcus saprophyticus subsp. saprophyticus (strain ATCC 15305 / DSM 20229 / NCIMB 8711 / NCTC 7292 / S-41).